The primary structure comprises 179 residues: Large ribosomal subunit protein uL5 (179 aa).

Belongs to the universal ribosomal protein uL5 family. As to quaternary structure, part of the 50S ribosomal subunit; part of the 5S rRNA/L5/L18/L25 subcomplex. Contacts the 5S rRNA and the P site tRNA. Forms a bridge to the 30S subunit in the 70S ribosome.

In terms of biological role, this is one of the proteins that bind and probably mediate the attachment of the 5S RNA into the large ribosomal subunit, where it forms part of the central protuberance. In the 70S ribosome it contacts protein S13 of the 30S subunit (bridge B1b), connecting the 2 subunits; this bridge is implicated in subunit movement. Contacts the P site tRNA; the 5S rRNA and some of its associated proteins might help stabilize positioning of ribosome-bound tRNAs. The protein is Large ribosomal subunit protein uL5 of Photorhabdus laumondii subsp. laumondii (strain DSM 15139 / CIP 105565 / TT01) (Photorhabdus luminescens subsp. laumondii).